The following is a 35-amino-acid chain: Natriuretic peptide TNPa (35 aa).

Cysteine 9 and cysteine 25 are disulfide-bonded.

As to expression, expressed by the venom gland.

It localises to the secreted. Its function is as follows. Snake venom natriuretic peptide that exhibits vasoactive and probable hypotensive activity. Is only weakly active on natriuretic peptide receptor-C (NPR3). Stimulates cGMP production through the natriuretic peptide receptor 1 (NPR1) with moderate potencies for the rat NPR1 (EC(50)=2020 nM), and very weak potencies over human NPR1 (15% activation at 10 uM). In vivo, does not impact systolic and diastolic blood pressure, as well as heart rate, when intravenously injected in conscious rabbits. Does not affect the bradycardia due to cardiac afferent stimulation (Bezold-Jarisch reflex). In Oxyuranus microlepidotus (Inland taipan), this protein is Natriuretic peptide TNPa.